The sequence spans 527 residues: MKYALILVLFFVVFIWQSSSSSANSETFTQCLTSNSDPKHPISPAIFFSGNGSYSSVLQANIRNLRFNTTSTPKPFLIIAATHESHVQAAITCGKRHNLQMKIRSGGHDYDGLSYVTYSGKPFFVLDMFNLRSVDVDVASKTAWVQTGAILGEVYYYIWEKSKTLAYPAGICPTVGVGGHISGGGYGNMMRKYGLTVDNTIDARMVDVNGKILDRKLMGEDLYWAINGGGGGSYGVVLAYKINLVEVPENVTVFRISRTLEQNATDIIHRWQQVAPKLPDELFIRTVIDVVNGTVSSQKTVRTTFIAMFLGDTTTLLSILNRRFPELGLVRSDCTETSWIQSVLFWTNIQVGSSETLLLQRNQPVNYLKRKSDYVREPISRTGLESIWKKMIELEIPTMAFNPYGGEMGRISSTVTPFPYRAGNLWKIQYGANWRDETLTDRYMELTRKLYQFMTPFVSKNPRQSFFNYRDVDLGINSHNGKISSYVEGKRYGKKYFAGNFERLVKIKTRVDSGNFFRNEQSIPVLP.

A signal peptide spans 1-20 (MKYALILVLFFVVFIWQSSS). Cys-31 and Cys-93 are joined by a disulfide. 2 N-linked (GlcNAc...) asparagine glycosylation sites follow: Asn-51 and Asn-68. The 177-residue stretch at 71–247 (STPKPFLIIA…LAYKINLVEV (177 aa)) folds into the FAD-binding PCMH-type domain. A cross-link (6-(S-cysteinyl)-8alpha-(pros-histidyl)-FAD (His-Cys)) is located at residues 108–172 (HDYDGLSYVT…KTLAYPAGIC (65 aa)). 3 N-linked (GlcNAc...) asparagine glycosylation sites follow: Asn-250, Asn-263, and Asn-292.

Belongs to the oxygen-dependent FAD-linked oxidoreductase family. The cofactor is FAD. Post-translationally, the FAD cofactor is bound via a bicovalent 6-S-cysteinyl, 8alpha-N1-histidyl FAD linkage.

It localises to the secreted. It is found in the cell wall. The polypeptide is Berberine bridge enzyme-like 8 (Arabidopsis thaliana (Mouse-ear cress)).